Consider the following 279-residue polypeptide: Movement protein (279 aa).

The protein belongs to the cucumovirus movement protein family.

The protein localises to the host cell junction. Its subcellular location is the host plasmodesma. Transports viral genome to neighboring plant cells directly through plasmosdesmata, without any budding. The movement protein allows efficient cell to cell propagation, by bypassing the host cell wall barrier. Acts by forming a tubular structure at the host plasmodesmata, enlarging it enough to allow free passage of virion capsids. In Cucumis sativus (Cucumber), this protein is Movement protein.